The sequence spans 179 residues: Bifunctional protein PyrR (179 aa).

The PRPP-binding motif lies at 100-112 (VILVDDVLFTGRT).

It belongs to the purine/pyrimidine phosphoribosyltransferase family. PyrR subfamily. In terms of assembly, homodimer and homohexamer; in equilibrium.

The enzyme catalyses UMP + diphosphate = 5-phospho-alpha-D-ribose 1-diphosphate + uracil. Its function is as follows. Regulates transcriptional attenuation of the pyrimidine nucleotide (pyr) operon by binding in a uridine-dependent manner to specific sites on pyr mRNA. This disrupts an antiterminator hairpin in the RNA and favors formation of a downstream transcription terminator, leading to a reduced expression of downstream genes. Also displays a weak uracil phosphoribosyltransferase activity which is not physiologically significant. The sequence is that of Bifunctional protein PyrR from Geobacillus thermodenitrificans (strain NG80-2).